The following is a 333-amino-acid chain: Ribosomal RNA small subunit methyltransferase C (333 aa).

This sequence belongs to the methyltransferase superfamily. RsmC family. As to quaternary structure, monomer.

The protein localises to the cytoplasm. The catalysed reaction is guanosine(1207) in 16S rRNA + S-adenosyl-L-methionine = N(2)-methylguanosine(1207) in 16S rRNA + S-adenosyl-L-homocysteine + H(+). In terms of biological role, specifically methylates the guanine in position 1207 of 16S rRNA in the 30S particle. In Actinobacillus succinogenes (strain ATCC 55618 / DSM 22257 / CCUG 43843 / 130Z), this protein is Ribosomal RNA small subunit methyltransferase C.